Here is a 310-residue protein sequence, read N- to C-terminus: Tagatose-6-phosphate kinase (310 aa).

The protein belongs to the carbohydrate kinase PfkB family. LacC subfamily.

It catalyses the reaction D-tagatofuranose 6-phosphate + ATP = D-tagatofuranose 1,6-bisphosphate + ADP + H(+). Its pathway is carbohydrate metabolism; D-tagatose 6-phosphate degradation; D-glyceraldehyde 3-phosphate and glycerone phosphate from D-tagatose 6-phosphate: step 1/2. This chain is Tagatose-6-phosphate kinase, found in Staphylococcus epidermidis (strain ATCC 12228 / FDA PCI 1200).